A 426-amino-acid polypeptide reads, in one-letter code: UDP-N-acetylglucosamine--N-acetylmuramyl-(pentapeptide) pyrophosphoryl-undecaprenol N-acetylglucosamine transferase (426 aa).

Residues 28–30 (TGG), N140, R176, S204, I257, and Q302 each bind UDP-N-acetyl-alpha-D-glucosamine. A disordered region spans residues 369–388 (AGNGPSGMGNGHSSEQPQER).

The protein belongs to the glycosyltransferase 28 family. MurG subfamily.

It localises to the cell inner membrane. It catalyses the reaction di-trans,octa-cis-undecaprenyl diphospho-N-acetyl-alpha-D-muramoyl-L-alanyl-D-glutamyl-meso-2,6-diaminopimeloyl-D-alanyl-D-alanine + UDP-N-acetyl-alpha-D-glucosamine = di-trans,octa-cis-undecaprenyl diphospho-[N-acetyl-alpha-D-glucosaminyl-(1-&gt;4)]-N-acetyl-alpha-D-muramoyl-L-alanyl-D-glutamyl-meso-2,6-diaminopimeloyl-D-alanyl-D-alanine + UDP + H(+). It functions in the pathway cell wall biogenesis; peptidoglycan biosynthesis. Cell wall formation. Catalyzes the transfer of a GlcNAc subunit on undecaprenyl-pyrophosphoryl-MurNAc-pentapeptide (lipid intermediate I) to form undecaprenyl-pyrophosphoryl-MurNAc-(pentapeptide)GlcNAc (lipid intermediate II). In Xanthomonas axonopodis pv. citri (strain 306), this protein is UDP-N-acetylglucosamine--N-acetylmuramyl-(pentapeptide) pyrophosphoryl-undecaprenol N-acetylglucosamine transferase.